Reading from the N-terminus, the 1773-residue chain is Zinc finger CCCH domain-containing protein 19 (1773 aa).

The disordered stretch occupies residues 145-166 (SGDRLEENKEVSMEEEPSSHEL). The span at 147-156 (DRLEENKEVS) shows a compositional bias: basic and acidic residues. Residues 196 to 218 (GEEIESDLESKKEKVDVIEEETT) are a coiled coil. Disordered stretches follow at residues 270–290 (IGEGAKDLTDGDAKEGVDVTE), 361–409 (DVDK…AGQT), and 434–591 (ISEM…KTVK). Composition is skewed to basic and acidic residues over residues 273–286 (GAKDLTDGDAKEGV) and 361–378 (DVDKDSEAGKSLDIHVPE). The stretch at 403-437 (AEEAGQTVDLEEIREENQELSKELAQVDETKISEM) forms a coiled coil. Composition is skewed to basic and acidic residues over residues 444-455 (MIKDEDQEKDDN) and 497-513 (KVDRTKIAEVSEETDTR). Acidic residues-rich tracts occupy residues 514-529 (IEDEDQEKDDEMTDVA) and 551-572 (EEMTETQEDSVMADEEPEEVEE). Positions 578-588 (GGKRKRGRNTK) are enriched in basic residues. The Nuclear localization signal 1 signature appears at 581-588 (RKRGRNTK). The segment at 599–665 (EDVCFMCFDG…TYLCYTCMFS (67 aa)) adopts a PHD-type zinc-finger fold. A compositionally biased stretch (basic and acidic residues) spans 741–751 (AKRPLKGHETN). The disordered stretch occupies residues 741-797 (AKRPLKGHETNASKQGTASETDYVTDGGSDSDSSPKKRKTRSRSKSGSAEKILSSGD). A compositionally biased stretch (polar residues) spans 752–762 (ASKQGTASETD). Residues 801–884 (SDETMEWASK…LNLLDSHFLK (84 aa)) form the SWIB/MDM2 domain. Over residues 903–919 (PNHVDVDENLDHPVKSG) the composition is skewed to basic and acidic residues. The segment at 903–935 (PNHVDVDENLDHPVKSGKDKKRKTRKKNVRKGR) is disordered. Basic residues predominate over residues 920 to 935 (KDKKRKTRKKNVRKGR). The Nuclear localization signal 2 motif lies at 921 to 928 (DKKRKTRK). Positions 944–1076 (AVDMHNINLI…KAIALQEVRV (133 aa)) constitute a Plus3 domain. A compositionally biased stretch (basic and acidic residues) spans 1139–1152 (EEIPEIHADPKMDP). A disordered region spans residues 1139-1274 (EEIPEIHADP…PETPARSSRA (136 aa)). Acidic residues predominate over residues 1153–1163 (DCESEDEDEKE). Polar residues predominate over residues 1193-1212 (FSSNESWTGTSNYSNTSANR). Position 1281 is a phosphoserine (Ser1281). In terms of domain architecture, GYF spans 1307 to 1361 (EKIWHYKDPSGKVQGPFSMAQLRKWNNTGYFPAKLEIWKANESPLDSVLLTDALA). Polar residues-rich tracts occupy residues 1409 to 1433 (RNSQDTWSQGGSLPSPTPNQITTPT), 1441 to 1469 (SRWSPTKPSPQSANQSMNYSVAQSGQSQT), 1499 to 1509 (VSVNHSATLHS), and 1518 to 1528 (SWGSMQTDHGG). Disordered regions lie at residues 1409–1469 (RNSQ…QSQT), 1485–1605 (QPQT…SWGQ), and 1649–1746 (GQTQ…QQNN). Low complexity predominate over residues 1529-1555 (SNTPSSQNNSTSYGTPSPSVLPSQSQP). Positions 1569–1579 (SQPNAQAQAQW) are enriched in polar residues. Low complexity-rich tracts occupy residues 1585-1602 (NNNQNSAQPQAPANQNSS) and 1666-1677 (QSQSQSQVQAQA). A compositionally biased stretch (polar residues) spans 1678–1708 (GTTGSGWMQPGQGIQSGNSNQNWGTQNQTAI). Positions 1722-1735 (GNQQQSQNGDSGYG) are enriched in low complexity. Residues 1737–1746 (NRQSGGQQNN) show a composition bias toward polar residues. A C3H1-type zinc finger spans residues 1747 to 1773 (FKGQRVCKFFRENGHCRKGASCNYLHN).

In terms of assembly, interacts with unmethylated histone H3 and AGO2. The interaction with AGO2 in required to direct DNA methylation and silencing. In terms of tissue distribution, expressed in seedlings, mostly in the vasculature and shoot apices of young seedlings.

The protein localises to the nucleus. Plays a central role in integrating RNA silencing and chromatin signals in 21 nt siRNA-dependent DNA methylation on cytosine pathway leading to transcriptional gene silencing of specific sequences. Involved in a chromatin-based RNA silencing pathway that encompasses both post-transcriptional gene silencing (PTGS) (e.g. RDR1, RDR6 and AGO2) and transcriptional gene silencing (TGS) (e.g. siRNA-dependent DNA methylation and histone H3) components. Mediates siRNA accumulation at specific chromatin loci. Binds H3K4me0 through its PHD to enforce low levels of H3K4 methylation and gene silencing at a subset of genomic loci. The protein is Zinc finger CCCH domain-containing protein 19 (NERD) of Arabidopsis thaliana (Mouse-ear cress).